A 286-amino-acid chain; its full sequence is Beta-lactamase SHV-1 (286 aa).

The signal sequence occupies residues 1 to 21 (MRYIRLCIISLLATLPLAVHA). Ser-66 acts as the Acyl-ester intermediate in catalysis. Cys-73 and Cys-119 are oxidised to a cystine. Glu-164 (proton acceptor) is an active-site residue. Position 230–232 (230–232 (KTG)) interacts with substrate.

Belongs to the class-A beta-lactamase family.

It carries out the reaction a beta-lactam + H2O = a substituted beta-amino acid. The sequence is that of Beta-lactamase SHV-1 (bla) from Escherichia coli.